Reading from the N-terminus, the 118-residue chain is Small ribosomal subunit protein uS13 (118 aa).

Residues 94–118 (GLPVRGQRTKTNARTRKGPRKPIKK) form a disordered region.

It belongs to the universal ribosomal protein uS13 family. As to quaternary structure, part of the 30S ribosomal subunit. Forms a loose heterodimer with protein S19. Forms two bridges to the 50S subunit in the 70S ribosome.

Functionally, located at the top of the head of the 30S subunit, it contacts several helices of the 16S rRNA. In the 70S ribosome it contacts the 23S rRNA (bridge B1a) and protein L5 of the 50S subunit (bridge B1b), connecting the 2 subunits; these bridges are implicated in subunit movement. Contacts the tRNAs in the A and P-sites. In Erwinia tasmaniensis (strain DSM 17950 / CFBP 7177 / CIP 109463 / NCPPB 4357 / Et1/99), this protein is Small ribosomal subunit protein uS13.